A 78-amino-acid chain; its full sequence is Sec-independent protein translocase protein TatA (78 aa).

The helical transmembrane segment at 1 to 21 (MGGISIWQLLIIAVIVVLLFG) threads the bilayer. Over residues 47–59 (ESEKKDADFEPKS) the composition is skewed to basic and acidic residues. The interval 47–78 (ESEKKDADFEPKSLEQQSKQAATESKKDKEQA) is disordered. Positions 60-69 (LEQQSKQAAT) are enriched in polar residues.

The protein belongs to the TatA/E family. As to quaternary structure, the Tat system comprises two distinct complexes: a TatABC complex, containing multiple copies of TatA, TatB and TatC subunits, and a separate TatA complex, containing only TatA subunits. Substrates initially bind to the TatABC complex, which probably triggers association of the separate TatA complex to form the active translocon.

The protein localises to the cell inner membrane. Part of the twin-arginine translocation (Tat) system that transports large folded proteins containing a characteristic twin-arginine motif in their signal peptide across membranes. TatA could form the protein-conducting channel of the Tat system. This Vibrio vulnificus (strain CMCP6) protein is Sec-independent protein translocase protein TatA.